Consider the following 520-residue polypeptide: MSQQVIIFDTTLRDGEQALQASLSVKEKLQIALALERMGVDIMEVGFPVSSPGDFESVRTIAQQVKNSRVCALARCVDKDIDVAAEALRIAEAFRIHVFLATSTLHIESKLKRSFDDVLAMAVHSVKRARNYTDDVEFSCEDAGRTPIDNLCRVVEAAITAGATTINIPDTVGYTTPYQFGGIITDLYERVPNIDKAIISVHCHDDLGMSVANSITAVQAGARQVEGTINGLGERAGNCSLEEVIMAIKVRHEMLGVHTNINHQEIYRTSQLVSKICNMPIPGNKAIVGSNAFAHSSGIHQDGVLKNRENYEIMTPESIGLKEVQLNLTSRSGRAAVKHRMEEMGYQDKDYNLDSLYDAFLKLADKKGQVFDYDLEALAFINKQQEEPEYYRLDYFSVQSGSSVMATASVKLVCGEEIKSEAATGNGPVDAVYQAINRITDYPIELVKYQLSAKGQGKDALGQVDIVVDHKGRRFHGVGLATDIVESSAKALVHVLNNIWRAHQVEKEKQRLQQNNQEMV.

The region spanning 5–267 (VIIFDTTLRD…HTNINHQEIY (263 aa)) is the Pyruvate carboxyltransferase domain. Residues Asp14, His202, His204, and Asn238 each contribute to the Mn(2+) site. Residues 392-520 (RLDYFSVQSG…RLQQNNQEMV (129 aa)) form a regulatory domain region.

The protein belongs to the alpha-IPM synthase/homocitrate synthase family. LeuA type 1 subfamily. As to quaternary structure, homodimer. Requires Mn(2+) as cofactor.

Its subcellular location is the cytoplasm. It catalyses the reaction 3-methyl-2-oxobutanoate + acetyl-CoA + H2O = (2S)-2-isopropylmalate + CoA + H(+). It functions in the pathway amino-acid biosynthesis; L-leucine biosynthesis; L-leucine from 3-methyl-2-oxobutanoate: step 1/4. Functionally, catalyzes the condensation of the acetyl group of acetyl-CoA with 3-methyl-2-oxobutanoate (2-ketoisovalerate) to form 3-carboxy-3-hydroxy-4-methylpentanoate (2-isopropylmalate). This chain is 2-isopropylmalate synthase, found in Yersinia pseudotuberculosis serotype O:1b (strain IP 31758).